The chain runs to 278 residues: MAVVIDGKQVAASYRETLKERVAELRARGIVPKLKVVLIGDDPASHSYVRGKERAAEEIGIDSQVLRFDETISEKELLDLIDLMNADEEVHGILVQLPLPKHIDESRVIMRISPEKDVDGFHPENVGKMMLGLDTLLPCTPHGILHLAKTQTEIAGKHVVVVGRSQIVGKPVGMLFLNESATVTYCHSKTADLGEMTRQADILIVAVGRAGLVTSDMVKPGALVIDVGVNRVEGRLVGDVDYEAVKEKASAITPVPGGVGPMTITMLMHNTVEVASRG.

NADP(+) is bound by residues 163 to 165 (GRS), Ser-188, and Val-229.

This sequence belongs to the tetrahydrofolate dehydrogenase/cyclohydrolase family. Homodimer.

The enzyme catalyses (6R)-5,10-methylene-5,6,7,8-tetrahydrofolate + NADP(+) = (6R)-5,10-methenyltetrahydrofolate + NADPH. The catalysed reaction is (6R)-5,10-methenyltetrahydrofolate + H2O = (6R)-10-formyltetrahydrofolate + H(+). The protein operates within one-carbon metabolism; tetrahydrofolate interconversion. Functionally, catalyzes the oxidation of 5,10-methylenetetrahydrofolate to 5,10-methenyltetrahydrofolate and then the hydrolysis of 5,10-methenyltetrahydrofolate to 10-formyltetrahydrofolate. The protein is Bifunctional protein FolD of Exiguobacterium sp. (strain ATCC BAA-1283 / AT1b).